Reading from the N-terminus, the 416-residue chain is Multifunctional CCA protein (416 aa).

ATP contacts are provided by Gly8 and Arg11. Gly8 and Arg11 together coordinate CTP. 2 residues coordinate Mg(2+): Asp21 and Asp23. 3 residues coordinate ATP: Arg91, Arg137, and Arg140. The CTP site is built by Arg91, Arg137, and Arg140. Positions 228-335 (SFIHTMLVLK…ITLFNRFDVW (108 aa)) constitute an HD domain.

It belongs to the tRNA nucleotidyltransferase/poly(A) polymerase family. Bacterial CCA-adding enzyme type 1 subfamily. As to quaternary structure, monomer. Can also form homodimers and oligomers. Mg(2+) serves as cofactor. It depends on Ni(2+) as a cofactor.

The enzyme catalyses a tRNA precursor + 2 CTP + ATP = a tRNA with a 3' CCA end + 3 diphosphate. The catalysed reaction is a tRNA with a 3' CCA end + 2 CTP + ATP = a tRNA with a 3' CCACCA end + 3 diphosphate. In terms of biological role, catalyzes the addition and repair of the essential 3'-terminal CCA sequence in tRNAs without using a nucleic acid template. Adds these three nucleotides in the order of C, C, and A to the tRNA nucleotide-73, using CTP and ATP as substrates and producing inorganic pyrophosphate. tRNA 3'-terminal CCA addition is required both for tRNA processing and repair. Also involved in tRNA surveillance by mediating tandem CCA addition to generate a CCACCA at the 3' terminus of unstable tRNAs. While stable tRNAs receive only 3'-terminal CCA, unstable tRNAs are marked with CCACCA and rapidly degraded. The protein is Multifunctional CCA protein of Haemophilus influenzae (strain PittGG).